Here is a 340-residue protein sequence, read N- to C-terminus: Holliday junction branch migration complex subunit RuvB (340 aa).

A large ATPase domain (RuvB-L) region spans residues threonine 4–tyrosine 184. ATP-binding positions include arginine 24, glycine 65, lysine 68, threonine 69, threonine 70, glutamate 131–phenylalanine 133, arginine 174, tyrosine 184, and arginine 221. Threonine 69 provides a ligand contact to Mg(2+). The segment at serine 185–glutamate 255 is small ATPAse domain (RuvB-S). The segment at proline 258–glutamate 340 is head domain (RuvB-H). 3 residues coordinate DNA: arginine 294, arginine 313, and arginine 318.

This sequence belongs to the RuvB family. As to quaternary structure, homohexamer. Forms an RuvA(8)-RuvB(12)-Holliday junction (HJ) complex. HJ DNA is sandwiched between 2 RuvA tetramers; dsDNA enters through RuvA and exits via RuvB. An RuvB hexamer assembles on each DNA strand where it exits the tetramer. Each RuvB hexamer is contacted by two RuvA subunits (via domain III) on 2 adjacent RuvB subunits; this complex drives branch migration. In the full resolvosome a probable DNA-RuvA(4)-RuvB(12)-RuvC(2) complex forms which resolves the HJ.

Its subcellular location is the cytoplasm. It catalyses the reaction ATP + H2O = ADP + phosphate + H(+). Functionally, the RuvA-RuvB-RuvC complex processes Holliday junction (HJ) DNA during genetic recombination and DNA repair, while the RuvA-RuvB complex plays an important role in the rescue of blocked DNA replication forks via replication fork reversal (RFR). RuvA specifically binds to HJ cruciform DNA, conferring on it an open structure. The RuvB hexamer acts as an ATP-dependent pump, pulling dsDNA into and through the RuvAB complex. RuvB forms 2 homohexamers on either side of HJ DNA bound by 1 or 2 RuvA tetramers; 4 subunits per hexamer contact DNA at a time. Coordinated motions by a converter formed by DNA-disengaged RuvB subunits stimulates ATP hydrolysis and nucleotide exchange. Immobilization of the converter enables RuvB to convert the ATP-contained energy into a lever motion, pulling 2 nucleotides of DNA out of the RuvA tetramer per ATP hydrolyzed, thus driving DNA branch migration. The RuvB motors rotate together with the DNA substrate, which together with the progressing nucleotide cycle form the mechanistic basis for DNA recombination by continuous HJ branch migration. Branch migration allows RuvC to scan DNA until it finds its consensus sequence, where it cleaves and resolves cruciform DNA. The protein is Holliday junction branch migration complex subunit RuvB of Hydrogenovibrio crunogenus (strain DSM 25203 / XCL-2) (Thiomicrospira crunogena).